Consider the following 277-residue polypeptide: Urease accessory protein UreD (277 aa).

Belongs to the UreD family. In terms of assembly, ureD, UreF and UreG form a complex that acts as a GTP-hydrolysis-dependent molecular chaperone, activating the urease apoprotein by helping to assemble the nickel containing metallocenter of UreC. The UreE protein probably delivers the nickel.

The protein resides in the cytoplasm. Functionally, required for maturation of urease via the functional incorporation of the urease nickel metallocenter. This chain is Urease accessory protein UreD, found in Pseudomonas entomophila (strain L48).